The sequence spans 55 residues: MAKSGRDKIKLESTAGTGHFYTTTKNKRTTPEKMAIMKFDPKVRKHVEYKETKIK.

The segment covering 1 to 11 (MAKSGRDKIKL) has biased composition (basic and acidic residues). Positions 1-28 (MAKSGRDKIKLESTAGTGHFYTTTKNKR) are disordered. Residues 14–24 (TAGTGHFYTTT) show a composition bias toward polar residues.

It belongs to the bacterial ribosomal protein bL33 family.

The protein is Large ribosomal subunit protein bL33 of Janthinobacterium sp. (strain Marseille) (Minibacterium massiliensis).